Consider the following 453-residue polypeptide: Homogentisate 1,2-dioxygenase (453 aa).

The interval 1–42 is disordered; it reads MLEKAEKQRRAGSGQQRAAGYMPGFGNDFETESLPGALPQGQ. The active-site Proton acceptor is the His306. Residues His349 and Glu355 each contribute to the Fe cation site. Homogentisate-binding residues include Tyr364 and His385. Residue His385 coordinates Fe cation.

It belongs to the homogentisate dioxygenase family. Hexamer; dimer of trimers. The cofactor is Fe cation.

It carries out the reaction homogentisate + O2 = 4-maleylacetoacetate + H(+). The protein operates within amino-acid degradation; L-phenylalanine degradation; acetoacetate and fumarate from L-phenylalanine: step 4/6. Functionally, involved in the catabolism of homogentisate (2,5-dihydroxyphenylacetate or 2,5-OH-PhAc), a central intermediate in the degradation of phenylalanine and tyrosine. Catalyzes the oxidative ring cleavage of the aromatic ring of homogentisate to yield maleylacetoacetate. This chain is Homogentisate 1,2-dioxygenase, found in Rhizobium meliloti (strain 1021) (Ensifer meliloti).